The following is a 208-amino-acid chain: AN1-type zinc finger protein 6 (208 aa).

The A20-type zinc-finger motif lies at 8 to 42 (SQVPMLCSTGCGFYGNPRTNGMCSVCYKEHLQRQN). Zn(2+) contacts are provided by C14, C18, C30, and C33. The segment covering 41-68 (QNSSNGRISPPATSVSSLSESLPVQCTD) has biased composition (polar residues). The disordered stretch occupies residues 41–140 (QNSSNGRISP…PSEEQSKSLE (100 aa)). At S49 the chain carries Phosphoserine. The segment covering 75-94 (QSTLDSTSSSMQPSPVSNQS) has biased composition (low complexity). 2 stretches are compositionally biased toward polar residues: residues 95–110 (LLSESVASSQLDSTSV) and 120–133 (LQASVSDTAQQPSE). The AN1-type zinc-finger motif lies at 143 to 189 (KQKKNRCFMCRKKVGLTGFECRCGNVYCGVHRYSDVHNCSYNYKADA). The Zn(2+) site is built by C149, C152, C163, C165, C170, H173, H179, and C181. Position 204 is an N6-acetyllysine (K204).

As to quaternary structure, interacts with PKN1. Interacts with TRAF2. Interacts with mono- and polyubiquitin. Interacts with PEX6. Interacts with PEX5 (Cys-linked ubiquitinated).

The protein resides in the cytoplasm. Involved in regulation of TNF-alpha induced NF-kappa-B activation and apoptosis. Involved in modulation of 'Lys-48'-linked polyubiquitination status of TRAF2 and decreases association of TRAF2 with RIPK1. Required for PTS1 target sequence-dependent protein import into peroxisomes and PEX5 stability; may cooperate with PEX6. In vitro involved in PEX5 export from the cytosol to peroxisomes. This is AN1-type zinc finger protein 6 (ZFAND6) from Pongo abelii (Sumatran orangutan).